A 393-amino-acid polypeptide reads, in one-letter code: Potassium channel subfamily K member 4 (393 aa).

Residues 1-3 (MRS) are Cytoplasmic-facing. Residues 4 to 24 (TTLLALLALVLLYLVSGALVF) form a helical membrane-spanning segment. Residues 25-87 (RALEQPHEQQ…NSTSNSSHSA (63 aa)) lie on the Extracellular side of the membrane. N-linked (GlcNAc...) asparagine glycans are attached at residues Asn78 and Asn82. The segment at residues 88 to 102 (WDLGSAFFFSGTIIT) is an intramembrane region (helical). K(+)-binding residues include Thr103, Ile104, Gly105, and Tyr106. Residues 103-108 (TIGYGN) form a selectivity filter 1 region. Residues 103–109 (TIGYGNV) lie within the membrane without spanning it. At 110 to 117 (ALRTDAGR) the chain is on the extracellular side. Residues 118–150 (LFCIFYALVGIPLFGILLAGVGDRLGSSLRHGI) traverse the membrane as a helical segment. Topologically, residues 151–172 (GHIEAIFLKWHVPPELVRVLSA) are cytoplasmic. A helical transmembrane segment spans residues 173 to 194 (MLFLLIGCLLFVLTPTFVFCYM). The Extracellular segment spans residues 195–199 (EDWSK). An intramembrane region (helical) is located at residues 200–213 (LEAIYFVIVTLTTV). Thr212, Val213, Gly214, and Phe215 together coordinate K(+). Residues 212-217 (TVGFGD) form a selectivity filter 2 region. An intramembrane segment occupies 214 to 219 (GFGDYV). Over 220-233 (AGADPRQDSPAYQP) the chain is Extracellular. A helical membrane pass occupies residues 234 to 260 (LVWFWILLGLAYFASVLTTIGNWLRVV). The Cytoplasmic segment spans residues 261–393 (SRRTRAEMGG…GRPRDKGVPV (133 aa)). Residues 285–393 (RVTQRAGPAA…GRPRDKGVPV (109 aa)) are disordered. A compositionally biased stretch (pro residues) spans 319–332 (SPSPPEKAQPPSPP). The span at 365–384 (PRGRRRPNPPRKPVRPRGPG) shows a compositional bias: basic residues.

It belongs to the two pore domain potassium channel (TC 1.A.1.8) family. In terms of assembly, homodimer; disulfide-linked. Forms heterodimers with other 2-pore domain K(+) channel subunits, such as KCNK2 and KCNK10. In terms of processing, N-glycosylated.

It is found in the cell membrane. It localises to the cell projection. The protein localises to the axon. It carries out the reaction K(+)(in) = K(+)(out). The enzyme catalyses Rb(+)(in) = Rb(+)(out). The catalysed reaction is Cs(+)(in) = Cs(+)(out). Activated by mechanical stretch and arachidonic acid. Functionally, k(+) channel that conducts voltage-dependent outward rectifying currents upon membrane depolarization. Voltage sensing is coupled to K(+) electrochemical gradient in an 'ion flux gating' mode where outward but not inward ion flow opens the gate. Converts to voltage-independent 'leak' conductance mode upon stimulation by various stimuli including mechanical membrane stretch, basic pH, heat and lipids. Homo- and heterodimerizes to form functional channels with distinct regulatory and gating properties. At trigeminal A-beta afferent nerves, the heterodimer of KCNK2/TREK-1 and KCNK4/TRAAK is mostly coexpressed at nodes of Ranvier where it conducts voltage-independent mechanosensitive and thermosensitive currents, allowing rapid action potential repolarization, high speed and high frequence saltatory conduction on myelinated nerves to ensure prompt sensory responses. Permeable to other monovalent cations such as Rb(+) and Cs(+). This is Potassium channel subfamily K member 4 from Homo sapiens (Human).